The primary structure comprises 672 residues: MSDIDALQALTSQMTQEGIRRLLVISGDAAWCRKRAEAIRAALPGDWLWVAPDAPAQPCCTPQALQTLLGREFRHAIFDAWQGFDAAAFAALSGTLQAGSWLLLLMPPYETWESRPDTDSLRWSDCAQPIPTPQFAQHLKRTLSRDPQTLLWRQRQPFCWPSYPSRECWRPATGEPQPEQAAILSRLREMPPGVATVIAPRGRGKSALAGQFISRMAGTAIVTAPAKTATDILAAFAGERFCFMAPDALLASGARADWLVVDEAAAIPTPLLLQLVSRFPRILLTTTVQGYEGTGRGFLLKFCARFPQLHRFTLRQPVRWAPECPLENIVSEALIFDDEAFAQAPHGAIEISAFYQQAWVNTPALPRAVYQLLSGAHYRTSPLDLRRMMDAPGQHFLQATANNRVAGALWLVEEGGLSAELSQAVWCGFRRPRGNLVAQSLAAHGSDPLAATLVGRRVSRIAVHPARQREGIGQQLIACACMQAAQCDYLSVSFGYTPKLWRFWQRCGFVLVRMGNHREASSGCYTAMALLPLSDAGKRLAQQEHRRLRRDADILTQWNGEAIPLAALREQALNDEDWRELVGFAFAHRPLLTSLGCLHRLLQYSALPLPALRGRLEEKASDAELCARLRISGRKALLALQRAQAAQALIALDAGRTQSLRDVMPGGGDHAG.

Residues Gln180, 202–211, and Arg319 contribute to the ATP site; that span reads GRGKSALAGQ. One can recognise an N-acetyltransferase domain in the interval 349-531; that stretch reads IEISAFYQQA…SGCYTAMALL (183 aa). Acetyl-CoA is bound by residues 461–463, 468–474, and Arg506; these read IAV and QREGIGQ.

The protein belongs to the RNA cytidine acetyltransferase family. TmcA subfamily.

The protein resides in the cytoplasm. The enzyme catalyses cytidine(34) in elongator tRNA(Met) + acetyl-CoA + ATP + H2O = N(4)-acetylcytidine(34) in elongator tRNA(Met) + ADP + phosphate + CoA + H(+). In terms of biological role, catalyzes the formation of N(4)-acetylcytidine (ac(4)C) at the wobble position of tRNA(Met), by using acetyl-CoA as an acetyl donor and ATP (or GTP). This Salmonella typhimurium (strain LT2 / SGSC1412 / ATCC 700720) protein is tRNA(Met) cytidine acetyltransferase TmcA.